Reading from the N-terminus, the 456-residue chain is Tyrosinase-like protein 2 (456 aa).

The N-terminal stretch at 1–22 (MNTMALFGKVILLQFLIGVGFC) is a signal peptide. Histidine 145, histidine 154, histidine 163, histidine 295, histidine 299, and histidine 322 together coordinate Cu cation.

It depends on Cu(2+) as a cofactor. In terms of tissue distribution, prismatic layer of shell (at protein level).

Its subcellular location is the secreted. This chain is Tyrosinase-like protein 2, found in Margaritifera margaritifera (Freshwater pearl mussel).